The primary structure comprises 410 residues: Arginine deiminase (410 aa).

The active-site Amidino-cysteine intermediate is the Cys398.

The protein belongs to the arginine deiminase family. As to quaternary structure, homodimer.

The protein resides in the cytoplasm. The catalysed reaction is L-arginine + H2O = L-citrulline + NH4(+). It functions in the pathway amino-acid degradation; L-arginine degradation via ADI pathway; carbamoyl phosphate from L-arginine: step 1/2. This is Arginine deiminase (arcA) from Mycoplasmopsis arginini (Mycoplasma arginini).